We begin with the raw amino-acid sequence, 342 residues long: MTNLTLALDAMGGDHGPHVTVPAALRALQLHSFLKIILVGDKTEIDVYLRQAEANLLSRIEIIHTDEVVSMSDRPVHALRTRKNSSMRLAIELVRDDRAQACVSAGNTGALMAMAKVLLKTLPGVDRPALVSCLPAVTQKPVYLLDLGANISCDSETLFQFAVMGSVLCEAVDKKSRPKVALLNVGIEEIKGNDQVQQAAQLLQHTDQINYTGFIEGDEIYSGNVDVIVCDGFVGNITLKTSEGIAKLLVHQLKRGLTQGLFVRFLAKLIAPRIQAVLSQMNPDHYNGASLIGLRGIVVKSHGNADETAYLQAISLAVTEAQRRLPEMIKDRLESILLDINN.

The protein belongs to the PlsX family. In terms of assembly, homodimer. Probably interacts with PlsY.

The protein localises to the cytoplasm. The catalysed reaction is a fatty acyl-[ACP] + phosphate = an acyl phosphate + holo-[ACP]. It participates in lipid metabolism; phospholipid metabolism. Its function is as follows. Catalyzes the reversible formation of acyl-phosphate (acyl-PO(4)) from acyl-[acyl-carrier-protein] (acyl-ACP). This enzyme utilizes acyl-ACP as fatty acyl donor, but not acyl-CoA. The polypeptide is Phosphate acyltransferase (Shewanella baltica (strain OS155 / ATCC BAA-1091)).